The primary structure comprises 349 residues: CCN family member 2 (349 aa).

Residues Met-1–Gly-26 form the signal peptide. An IGFBP N-terminal domain is found at Gln-27–Lys-98. Residue Asn-28 is glycosylated (N-linked (GlcNAc...) asparagine). Disulfide bonds link Cys-29/Cys-54, Cys-33/Cys-56, Cys-35/Cys-57, Cys-43/Cys-60, Cys-68/Cys-82, and Cys-74/Cys-95. One can recognise a VWFC domain in the interval Ala-101–Asp-167. One can recognise a TSP type-1 domain in the interval Asn-198 to Glu-243. An N-linked (GlcNAc...) asparagine glycan is attached at Asn-225. Residues Glu-247 to Ala-349 are heparin-binding. Disulfide bonds link Cys-256/Cys-293, Cys-273/Cys-307, Cys-284/Cys-323, Cys-287/Cys-325, and Cys-292/Cys-329. Residues Cys-256–Pro-330 enclose the CTCK domain.

This sequence belongs to the CCN family. As to quaternary structure, monomer. Interacts with TSKU. As to expression, expressed in bone marrow and thymic cells. Also expressed one of two Wilms tumors tested.

The protein resides in the secreted. The protein localises to the extracellular space. Its subcellular location is the extracellular matrix. Functionally, major connective tissue mitoattractant secreted by vascular endothelial cells. Promotes proliferation and differentiation of chondrocytes. Is involved in the stimulation of osteoblast differentiation and has a critical role in osteogenesis. Mediates heparin- and divalent cation-dependent cell adhesion in many cell types including fibroblasts, myofibroblasts, endothelial and epithelial cells. Enhances fibroblast growth factor-induced DNA synthesis. This is CCN family member 2 from Homo sapiens (Human).